Reading from the N-terminus, the 211-residue chain is MNNEQPKIPQATAKRLPLYYRFLKNLHASGKQRVSSAELSEAVKVDSATIRRDFSYFGALGKKGYGYNVNYLLSFFRKTLDQDETTEVALFGVGNLGTAFLNYNFSKNNNTKIVMAFDVDPDKVGTKVGGVPVYHLDELEEKLGGITVAILTVPAQVAQPITDRLVQKGIKGILNFTPARLHVPEHIRVHHIDLAVELQSLVYFLKHYGNE.

The H-T-H motif DNA-binding region spans 18 to 57 (LYYRFLKNLHASGKQRVSSAELSEAVKVDSATIRRDFSYF). Residue 92–97 (GVGNLG) coordinates NAD(+).

This sequence belongs to the transcriptional regulatory Rex family. Homodimer.

It is found in the cytoplasm. Functionally, modulates transcription in response to changes in cellular NADH/NAD(+) redox state. The polypeptide is Redox-sensing transcriptional repressor Rex (Anoxybacillus flavithermus (strain DSM 21510 / WK1)).